A 417-amino-acid polypeptide reads, in one-letter code: E3 ubiquitin-protein ligase RNF135 (417 aa).

Residues 21–67 (CIICQGLLDQPTTLPCGHSFCLRCLHDLWVSKRGAVDGCPWACPICR) form an RING-type zinc finger. Disordered stretches follow at residues 95–118 (EVEAGSEPEPAPAPRSAPQVTVQK) and 143–173 (TQRPNLGSGQDNAQGTPPTDSSSEGEHSLDS). 2 coiled-coil regions span residues 121–145 (TNVIQELTDMVRQLVDDVKSLQTQR) and 180–204 (SISQKKIQEILHNLEEIQEKLQGSV). Polar residues predominate over residues 143-164 (TQRPNLGSGQDNAQGTPPTDSS). A B30.2/SPRY domain is found at 225-417 (PDQRRPAPRK…NYLEIKQLNT (193 aa)).

In terms of assembly, homodimer. Interacts (homodimer) with RIGI (double-stranded RNA-bound oligomeric form); involved in both RIGI ubiquitination, oligomerization into filaments associated with viral RNAs and the bridging of these filaments. Interacts with UBE2D3 and UBE2N; E2 ubiquitin ligases involved in RNF135-mediated ubiquitination of RIGI and activation of the RIG-I signaling pathway. Interacts with PCBP2. In terms of tissue distribution, ubiquitously expressed.

It is found in the cytoplasm. It localises to the stress granule. It catalyses the reaction S-ubiquitinyl-[E2 ubiquitin-conjugating enzyme]-L-cysteine + [acceptor protein]-L-lysine = [E2 ubiquitin-conjugating enzyme]-L-cysteine + N(6)-ubiquitinyl-[acceptor protein]-L-lysine.. The protein operates within protein modification; protein ubiquitination. E2-dependent E3 ubiquitin-protein ligase that functions as a RIGI coreceptor in the sensing of viral RNAs in cell cytoplasm and the activation of the antiviral innate immune response. Together with the UBE2D3, UBE2N and UB2V1 E2 ligases, catalyzes the 'Lys-63'-linked polyubiquitination of RIGI oligomerized on viral RNAs, an essential step in the activation of the RIG-I signaling pathway. Through a ubiquitin-independent parallel mechanism, which consists in bridging RIGI filaments forming on longer viral RNAs, further activates the RIG-I signaling pathway. This second mechanism that synergizes with the ubiquitin-dependent one would thereby allow an RNA length-dependent regulation of the RIG-I signaling pathway. Associated with the E2 ligase UBE2N, also constitutively synthesizes unanchored 'Lys-63'-linked polyubiquitin chains that may also activate the RIG-I signaling pathway. It is not involved in the innate immune response against DNA viruses. This chain is E3 ubiquitin-protein ligase RNF135, found in Mus musculus (Mouse).